The sequence spans 944 residues: Leucine--tRNA ligase 2 (944 aa).

The 'HIGH' region motif lies at 36-46 (PYPNSPWHIGH). The short motif at 623–627 (KMSKS) is the 'KMSKS' region element. K626 contacts ATP.

It belongs to the class-I aminoacyl-tRNA synthetase family.

It localises to the cytoplasm. It carries out the reaction tRNA(Leu) + L-leucine + ATP = L-leucyl-tRNA(Leu) + AMP + diphosphate. This Saccharolobus solfataricus (strain ATCC 35092 / DSM 1617 / JCM 11322 / P2) (Sulfolobus solfataricus) protein is Leucine--tRNA ligase 2.